The chain runs to 210 residues: Large ribosomal subunit protein uL3 (210 aa).

The interval Phe119–Pro151 is disordered.

This sequence belongs to the universal ribosomal protein uL3 family. As to quaternary structure, part of the 50S ribosomal subunit. Forms a cluster with proteins L14 and L19.

One of the primary rRNA binding proteins, it binds directly near the 3'-end of the 23S rRNA, where it nucleates assembly of the 50S subunit. This chain is Large ribosomal subunit protein uL3, found in Bacillus cytotoxicus (strain DSM 22905 / CIP 110041 / 391-98 / NVH 391-98).